A 353-amino-acid chain; its full sequence is Lipase ZK262.3 (353 aa).

The signal sequence occupies residues 1–22 (MPKNLRFSVFLLFLLCINSVFG). N-linked (GlcNAc...) asparagine glycosylation is found at asparagine 32 and asparagine 64. Serine 163 functions as the Nucleophile in the catalytic mechanism. Aspartate 221 serves as the catalytic Charge relay system. N-linked (GlcNAc...) asparagine glycosylation occurs at asparagine 267. A disulfide bridge connects residues cysteine 277 and cysteine 288. Histidine 306 functions as the Charge relay system in the catalytic mechanism.

Belongs to the AB hydrolase superfamily. Lipase family.

The protein resides in the secreted. Probable lipase. This chain is Lipase ZK262.3, found in Caenorhabditis elegans.